A 125-amino-acid chain; its full sequence is DNA-directed RNA polymerase I subunit RPA12 (125 aa).

Residues 1–60 (MSVVGSLIFCLDCGDLLENPNAVLGSNVECSQCKAIYPKSQFSNLKVVTTTADDAFPSSL) are interaction with RPA2. A necessary and sufficient for recruitment into Pol I region spans residues 1–69 (MSVVGSLIFC…LRAKKSVVKT (69 aa)). The Zn(2+) site is built by C10, C13, C30, C33, C86, C89, C114, and C117. Residues 10–33 (CLDCGDLLENPNAVLGSNVECSQC) form a C4-type zinc finger. Residues 79-125 (GATIKEKCPQCGNEEMNYHTLQLRSADEGATVFYTCTSCGYKFRTNN) are required for RNA cleavage, but not essential for elongation activity. The TFIIS-type zinc finger occupies 82–122 (IKEKCPQCGNEEMNYHTLQLRSADEGATVFYTCTSCGYKFR).

This sequence belongs to the archaeal RpoM/eukaryotic RPA12/RPB9/RPC11 RNA polymerase family. Component of the RNA polymerase I (Pol I) complex consisting of 14 subunits: RPA135, RPA190, RPC40, RPA14, RPB5, RPO26, RPA43, RPB8, RPA12, RPB10, RPC19, RPC10, RPA49 and RPA34. The complex is composed of a horseshoe-shaped core containing ten subunits (RPA135, RPA190, RPB5, RPO26, RPB8, RPB10, RPC10, RPA12, RPC19 and RPC40) where RPA135 and RPA190 form the DNA-binding cleft. Outside of the core, RPA14 and RPA43 form the stalk that mediates interactions with transcription initiation factors and newly synthesized RNA. Interacts with RPA2/RPA135. Peripheral subunit that binds the catalytic zinc ion that is required for RNA cleavage. The heterodimer formed by RPA34 and RPA49 stabilizes subunit RPA12 and stimulates RPA12-dependent RNA cleavage. Involved in the recruitment of RPA49 to Pol I.

The protein resides in the nucleus. The protein localises to the nucleolus. In terms of biological role, DNA-dependent RNA polymerases catalyze the transcription of DNA into RNA using the four ribonucleoside triphosphates as substrates. Component of RNA polymerase I (Pol I) which synthesizes ribosomal RNA precursors. Besides, RNA polymerase I has intrinsic RNA cleavage activity. Proposed to contribute to the polymerase catalytic activity and form the polymerase active center together with the two largest subunits. Subunit RPA12 contributes a catalytic zinc ribbon that is required for RNA cleavage by Pol I. Involved in transcriptional termination. The chain is DNA-directed RNA polymerase I subunit RPA12 (RPA12) from Saccharomyces cerevisiae (strain ATCC 204508 / S288c) (Baker's yeast).